Consider the following 347-residue polypeptide: Ribosomal RNA small subunit methyltransferase C (347 aa).

The protein belongs to the methyltransferase superfamily. RsmC family. As to quaternary structure, monomer.

The protein localises to the cytoplasm. The enzyme catalyses guanosine(1207) in 16S rRNA + S-adenosyl-L-methionine = N(2)-methylguanosine(1207) in 16S rRNA + S-adenosyl-L-homocysteine + H(+). Functionally, specifically methylates the guanine in position 1207 of 16S rRNA in the 30S particle. This is Ribosomal RNA small subunit methyltransferase C from Serratia proteamaculans (strain 568).